We begin with the raw amino-acid sequence, 109 residues long: U-scoloptoxin(16)-Ssd1a (109 aa).

The first 23 residues, 1–23 (MTTSATVIIMVLCVGSLVIFSEG), serve as a signal peptide directing secretion.

Contains 4 disulfide bonds. As to expression, expressed by the venom gland.

Its subcellular location is the secreted. The chain is U-scoloptoxin(16)-Ssd1a from Scolopendra dehaani (Thai centipede).